We begin with the raw amino-acid sequence, 235 residues long: FsC-acetyl coenzyme A-N(2)-transacetylase (235 aa).

The 177-residue stretch at 14 to 190 (LELVPLGHEH…RYSITREEWL (177 aa)) folds into the N-acetyltransferase domain. Residues 106-108 (FRV), Gly114, Asn146, and 151-153 (AVM) contribute to the CoA site.

It participates in siderophore biosynthesis. Its function is as follows. FsC-acetyl coenzyme A-N(2)-transacetylase; part of the siderophore biosynthetic pathway. Aspergillus fumigatus produces 4 types of siderophores, low-molecular-mass iron chelators, including excreted fusarinine C (FsC) and triacetylfusarinine C (TAFC) for iron uptake and intacellular ferricrocin (FC) for hyphal and hydroxyferricrocin (HFC) for conidial iron distribution and storage. TAFC consists of 3 N(2)-acetyl-N(5)-anhydromevalonyl-N(5)-hydroxyornithine residues cyclically linked by ester bonds; FC is a cyclic hexapeptide with the structure Gly-Ser-Gly-(N(5)-acetyl-N(5)-hydroxyornithine)x3. The biosynthesis of all four siderophores depends on the hydroxylation of ornithine, catalyzed by the monooxygenase sidA. Subsequently, the pathways for biosynthesis of extra- and intracellular siderophores split. For biosynthesis of extracellular siderophores, the transacylase sidF transfers anhydromevalonyl to N(5)-hydroxyornithine. The required anhydromevalonyl-CoA moiety is derived from mevalonate by CoA ligation and dehydration catalyzed by sidI and sidH respectively. The acetylation of N(5)-hydroxyornithine for FC biosynthesis involves the constitutively expressed sidL. FC is hydroxylated to HFC by an as yet uncharacterized enzyme during conidiation. Assembly of fusarinine C (FsC) and FC is catalyzed by two different nonribosomal peptide synthetases (NRPS), sidD and sidC respectively. Subsequently, sidG catalyzes N2-acetylation of FsC for forming TAFC. Both extra- and intracellular siderophores are crucial for growth during iron limitation and virulence. The chain is FsC-acetyl coenzyme A-N(2)-transacetylase from Aspergillus fumigatus (strain ATCC MYA-4609 / CBS 101355 / FGSC A1100 / Af293) (Neosartorya fumigata).